Consider the following 101-residue polypeptide: Large ribosomal subunit protein uL23 (101 aa).

The protein belongs to the universal ribosomal protein uL23 family. As to quaternary structure, part of the 50S ribosomal subunit. Contacts protein L29, and trigger factor when it is bound to the ribosome.

Its function is as follows. One of the early assembly proteins it binds 23S rRNA. One of the proteins that surrounds the polypeptide exit tunnel on the outside of the ribosome. Forms the main docking site for trigger factor binding to the ribosome. The sequence is that of Large ribosomal subunit protein uL23 from Histophilus somni (strain 129Pt) (Haemophilus somnus).